Consider the following 289-residue polypeptide: Heme oxygenase 1 (289 aa).

Residues 1–266 (MERPQLDSMS…SQISTSSSQT (266 aa)) lie on the Cytoplasmic side of the membrane. Positions 18, 25, 134, and 183 each coordinate heme b. Positions 225–261 (HKDQSPSQTEFLRQRPASLVQDTTSAETPRGKSQIST) are disordered. Phosphoserine is present on residues Ser229 and Ser242. Residues 244–261 (VQDTTSAETPRGKSQIST) are compositionally biased toward polar residues. A helical; Anchor for type IV membrane protein transmembrane segment spans residues 267 to 289 (PLLRWVLTLSFLLATVAVGIYAM).

This sequence belongs to the heme oxygenase family. Homodimer and higher order homooligomer. Oligomerization is crucial for its stability and function in the endoplasmic reticulum. Interacts with FLVCR2; this interaction is potentiated in the presence of heme. In terms of processing, a soluble form arises by proteolytic removal of the membrane anchor.

The protein resides in the endoplasmic reticulum membrane. It catalyses the reaction heme b + 3 reduced [NADPH--hemoprotein reductase] + 3 O2 = biliverdin IXalpha + CO + Fe(2+) + 3 oxidized [NADPH--hemoprotein reductase] + 3 H2O + H(+). Its activity is regulated as follows. Inhibited by metalloporphyrins such as Sn- and Zn-protoporphyrins. Functionally, catalyzes the oxidative cleavage of heme at the alpha-methene bridge carbon, released as carbon monoxide (CO), to generate biliverdin IXalpha, while releasing the central heme iron chelate as ferrous iron. Affords protection against programmed cell death and this cytoprotective effect relies on its ability to catabolize free heme and prevent it from sensitizing cells to undergo apoptosis. Catalyzes the oxidative cleavage of heme at the alpha-methene bridge carbon, released as carbon monoxide (CO), to generate biliverdin IXalpha, while releasing the central heme iron chelate as ferrous iron. This chain is Heme oxygenase 1 (Hmox1), found in Rattus norvegicus (Rat).